The chain runs to 498 residues: Dynein regulatory complex subunit 5 (498 aa).

Disordered stretches follow at residues 27–52 (ALGS…LKTK) and 200–223 (MPTP…EPEK). A compositionally biased stretch (low complexity) spans 28-47 (LGSSSTGPTSLKTSSTPTPG). 6 LRR repeats span residues 276-299 (CHTL…ILIR), 306-327 (ALEE…AAAK), 333-353 (RLRV…QSLA), 361-382 (NLVF…AIAH), 389-409 (CLSV…TLLS), and 417-438 (TLVS…QLLE).

The protein belongs to the DRC5 family. In terms of assembly, component of the nexin-dynein regulatory complex (N-DRC). Interacts with DRC1. Interacts with FBXL13/DRC6, DRC3 and DRC7. Testis-specific (at protein level).

The protein resides in the cell projection. The protein localises to the cilium. Its subcellular location is the flagellum. It localises to the cytoplasm. It is found in the cytoskeleton. The protein resides in the flagellum axoneme. Functionally, component of the nexin-dynein regulatory complex (N-DRC) a key regulator of ciliary/flagellar motility which maintains the alignment and integrity of the distal axoneme and regulates microtubule sliding in motile axonemes. May play a role in the assembly of N-DRC. Required for sperm motility. The chain is Dynein regulatory complex subunit 5 (Tcte1) from Mus musculus (Mouse).